The following is a 380-amino-acid chain: Probable inactive dehydrogenase easA (380 aa).

Residues Pro-25–Thr-27, Ala-60, Gln-102, and His-171 each bind FMN. Substrate contacts are provided by His-171 and Asn-174. Residues Lys-223, Gly-299, Gly-324 to Arg-325, and Arg-325 each bind FMN. Tyr-352 contributes to the substrate binding site.

This sequence belongs to the NADH:flavin oxidoreductase/NADH oxidase family.

In terms of biological role, probable inactive dehydrogenase; part of the gene cluster that mediates the biosynthesis of fungal ergot alkaloid. DmaW catalyzes the first step of ergot alkaloid biosynthesis by condensing dimethylallyl diphosphate (DMAP) and tryptophan to form 4-dimethylallyl-L-tryptophan. The second step is catalyzed by the methyltransferase easF that methylates 4-dimethylallyl-L-tryptophan in the presence of S-adenosyl-L-methionine, resulting in the formation of 4-dimethylallyl-L-abrine. The catalase easC and the FAD-dependent oxidoreductase easE then transform 4-dimethylallyl-L-abrine to chanoclavine-I which is further oxidized by easD in the presence of NAD(+), resulting in the formation of chanoclavine-I aldehyde. Agroclavine dehydrogenase easG then mediates the conversion of chanoclavine-I aldehyde to agroclavine via a non-enzymatic adduct reaction: the substrate is an iminium intermediate that is formed spontaneously from chanoclavine-I aldehyde in the presence of glutathione. The presence of easA is not required to complete this reaction. Further conversion of agroclavine to paspalic acid is a two-step process involving oxidation of agroclavine to elymoclavine and of elymoclavine to paspalic acid, the second step being performed by the elymoclavine oxidase cloA. Paspalic acid is then further converted to D-lysergic acid. Ergopeptines are assembled from D-lysergic acid and three different amino acids by the D-lysergyl-peptide-synthetases composed each of a monomudular and a trimodular nonribosomal peptide synthetase subunit. LpsB and lpsC encode the monomodular subunits responsible for D-lysergic acid activation and incorporation into the ergopeptine backbone. LpsA1 and A2 subunits encode the trimodular nonribosomal peptide synthetase assembling the tripeptide portion of ergopeptines. LpsA1 is responsible for formation of the major ergopeptine, ergotamine, and lpsA2 for alpha-ergocryptine, the minor ergopeptine of the total alkaloid mixture elaborated by C.purpurea. D-lysergyl-tripeptides are assembled by the nonribosomal peptide synthetases and released as N-(D-lysergyl-aminoacyl)-lactams. Cyclolization of the D-lysergyl-tripeptides is performed by the Fe(2+)/2-ketoglutarate-dependent dioxygenase easH which introduces a hydroxyl group into N-(D-lysergyl-aminoacyl)-lactam at alpha-C of the aminoacyl residue followed by spontaneous condensation with the terminal lactam carbonyl group. In Claviceps purpurea (Ergot fungus), this protein is Probable inactive dehydrogenase easA.